Here is a 135-residue protein sequence, read N- to C-terminus: Large ribosomal subunit protein uL16 (135 aa).

This sequence belongs to the universal ribosomal protein uL16 family. Part of the 50S ribosomal subunit.

Its function is as follows. Binds 23S rRNA and is also seen to make contacts with the A and possibly P site tRNAs. The protein is Large ribosomal subunit protein uL16 of Bdellovibrio bacteriovorus (strain ATCC 15356 / DSM 50701 / NCIMB 9529 / HD100).